The primary structure comprises 220 residues: Putative respiratory nitrate reductase subunit Rieske (220 aa).

Residues 118-206 enclose the Rieske domain; it reads KAPTLLVRHA…ITVSSEGYLI (89 aa). [2Fe-2S] cluster is bound by residues C151, H153, C168, and H171. Cysteines 156 and 170 form a disulfide.

In terms of assembly, probable multiprotein complex; a catalytic heterodimer of an alpha and beta chain is proposed to associate with additional subunits involved in membrane attachment and electron transfer. It depends on [2Fe-2S] cluster as a cofactor.

It localises to the cell membrane. The respiratory membrane-bound nitrate reductase enzyme complex plays a role in generation of metabolic energy by using nitrate as a terminal electron acceptor during anaerobic conditions. Proposed Rieske subunit involved in a protonmotive Q-cycle mechanism-based electron transfer electrons to the beta subunit. The sequence is that of Putative respiratory nitrate reductase subunit Rieske (narB) from Haloferax mediterranei (strain ATCC 33500 / DSM 1411 / JCM 8866 / NBRC 14739 / NCIMB 2177 / R-4) (Halobacterium mediterranei).